Consider the following 282-residue polypeptide: MKIITTVQEMQQITNELRASGKSIGFVPTMGYLHEGHATLLRKAREENEIVVLSVFVNPLQFGPNEDLDRYPRDIDRDENVAKENGVDYLFYPSVEEMYPAEQTTTVEVVKRTDVLCGKQRPGHFAGVATVLMKLFNITLPTRAYFGMKDAQQVAVIEGFVADFNIPVTIVPVDIVREEDGLAKSSRNVYLSQEEREEAPHLYRSLCIAKERIEAGERNAEIITTLVKEYIETYTKGTVDYADLYTYPSLQVVDKIEGRIILAIAVKFDNVRLIDNITLTVK.

Position 30–37 (30–37 (MGYLHEGH)) interacts with ATP. The Proton donor role is filled by His-37. Gln-61 contacts (R)-pantoate. Residue Gln-61 coordinates beta-alanine. An ATP-binding site is contributed by 147 to 150 (GMKD). Gln-153 lines the (R)-pantoate pocket. Residues Val-176 and 184 to 187 (KSSR) each bind ATP.

The protein belongs to the pantothenate synthetase family. In terms of assembly, homodimer.

The protein localises to the cytoplasm. The enzyme catalyses (R)-pantoate + beta-alanine + ATP = (R)-pantothenate + AMP + diphosphate + H(+). It participates in cofactor biosynthesis; (R)-pantothenate biosynthesis; (R)-pantothenate from (R)-pantoate and beta-alanine: step 1/1. In terms of biological role, catalyzes the condensation of pantoate with beta-alanine in an ATP-dependent reaction via a pantoyl-adenylate intermediate. This chain is Pantothenate synthetase, found in Bacillus cereus (strain ATCC 10987 / NRS 248).